A 607-amino-acid chain; its full sequence is UvrABC system protein C (607 aa).

Residues 16-94 (GRPGVYRMFD…IKEWRPPYNI (79 aa)) enclose the GIY-YIG domain. The 36-residue stretch at 203–238 (QQLGNELNAEMEKAAMALDFEKAAELRDQIALLRRV) folds into the UVR domain.

This sequence belongs to the UvrC family. As to quaternary structure, interacts with UvrB in an incision complex.

It localises to the cytoplasm. Functionally, the UvrABC repair system catalyzes the recognition and processing of DNA lesions. UvrC both incises the 5' and 3' sides of the lesion. The N-terminal half is responsible for the 3' incision and the C-terminal half is responsible for the 5' incision. This is UvrABC system protein C from Pseudomonas putida (strain ATCC 700007 / DSM 6899 / JCM 31910 / BCRC 17059 / LMG 24140 / F1).